A 231-amino-acid polypeptide reads, in one-letter code: Orotidine 5'-phosphate decarboxylase (231 aa).

Substrate contacts are provided by residues Asp12, Lys34, 61-70 (DLKFHDIPNT), Thr120, Arg181, Gln190, Gly210, and Arg211. Lys63 acts as the Proton donor in catalysis.

The protein belongs to the OMP decarboxylase family. Type 1 subfamily. In terms of assembly, homodimer.

It carries out the reaction orotidine 5'-phosphate + H(+) = UMP + CO2. It functions in the pathway pyrimidine metabolism; UMP biosynthesis via de novo pathway; UMP from orotate: step 2/2. In terms of biological role, catalyzes the decarboxylation of orotidine 5'-monophosphate (OMP) to uridine 5'-monophosphate (UMP). This chain is Orotidine 5'-phosphate decarboxylase, found in Alcanivorax borkumensis (strain ATCC 700651 / DSM 11573 / NCIMB 13689 / SK2).